The primary structure comprises 306 residues: MEPLELEGFLNLLKPPGMTSHDVVAKARRLLKEKRIGHLGTLDPDAAGVLPIAIGQATRLIELVAGVDKAYRTQLRLGAVTDSQDASGRIVKTGAVPALSRDDWEETLRPFRGQILQTPPMVSAVSVGGKRLYEYARQGIEVERSARPVSISRIEIVHYDPATPEEIVIDVECSAGTYIRTLCHDIGQRLGCGGHMGWLIRTRSGLFSLRDSLTLESLAEGPPKEQIVTPFEALAHLPALEIGENRLAALSRGLAQYLQGDGWSEGQWIRMHRRQKLLAVGQAIRKDEQWLCQPRKVFTRLETRSK.

The active-site Nucleophile is aspartate 43.

This sequence belongs to the pseudouridine synthase TruB family. Type 1 subfamily.

It carries out the reaction uridine(55) in tRNA = pseudouridine(55) in tRNA. Functionally, responsible for synthesis of pseudouridine from uracil-55 in the psi GC loop of transfer RNAs. This chain is tRNA pseudouridine synthase B, found in Heliobacterium modesticaldum (strain ATCC 51547 / Ice1).